The following is a 361-amino-acid chain: tRNA/tmRNA (uracil-C(5))-methyltransferase (361 aa).

S-adenosyl-L-methionine contacts are provided by Gln-185, Tyr-213, Asn-218, Glu-234, and Asp-294. The Nucleophile role is filled by Cys-319. The active-site Proton acceptor is Glu-353.

Belongs to the class I-like SAM-binding methyltransferase superfamily. RNA M5U methyltransferase family. TrmA subfamily.

The enzyme catalyses uridine(54) in tRNA + S-adenosyl-L-methionine = 5-methyluridine(54) in tRNA + S-adenosyl-L-homocysteine + H(+). It carries out the reaction uridine(341) in tmRNA + S-adenosyl-L-methionine = 5-methyluridine(341) in tmRNA + S-adenosyl-L-homocysteine + H(+). Dual-specificity methyltransferase that catalyzes the formation of 5-methyluridine at position 54 (m5U54) in all tRNAs, and that of position 341 (m5U341) in tmRNA (transfer-mRNA). This is tRNA/tmRNA (uracil-C(5))-methyltransferase from Pseudomonas syringae pv. syringae (strain B728a).